The chain runs to 123 residues: Small ribosomal subunit protein uS12cz/uS12cy (123 aa).

It belongs to the universal ribosomal protein uS12 family. As to quaternary structure, part of the 30S ribosomal subunit.

The protein localises to the plastid. It localises to the chloroplast. In terms of biological role, with S4 and S5 plays an important role in translational accuracy. Located at the interface of the 30S and 50S subunits. This Citrus sinensis (Sweet orange) protein is Small ribosomal subunit protein uS12cz/uS12cy (rps12-A).